The chain runs to 392 residues: Sulfate adenylyltransferase (392 aa).

Belongs to the sulfate adenylyltransferase family.

The enzyme catalyses sulfate + ATP + H(+) = adenosine 5'-phosphosulfate + diphosphate. Its pathway is sulfur metabolism; hydrogen sulfide biosynthesis; sulfite from sulfate: step 1/3. The protein is Sulfate adenylyltransferase of Nostoc punctiforme (strain ATCC 29133 / PCC 73102).